The sequence spans 361 residues: Peptide chain release factor 1 (361 aa).

Gln-235 is modified (N5-methylglutamine).

This sequence belongs to the prokaryotic/mitochondrial release factor family. Post-translationally, methylated by PrmC. Methylation increases the termination efficiency of RF1.

It localises to the cytoplasm. Peptide chain release factor 1 directs the termination of translation in response to the peptide chain termination codons UAG and UAA. This Xanthomonas euvesicatoria pv. vesicatoria (strain 85-10) (Xanthomonas campestris pv. vesicatoria) protein is Peptide chain release factor 1.